A 626-amino-acid chain; its full sequence is Chaperone protein HtpG (626 aa).

Residues 1–341 form an a; substrate-binding region; it reads MIKKEFKAES…SEDLSLNISR (341 aa). The interval 342–552 is b; it reads EMLQHDRQLK…DGDVTIEMEK (211 aa). The interval 553–626 is c; that stretch reads ILSAMPNNQE…FTNDICKLMS (74 aa).

Belongs to the heat shock protein 90 family. Homodimer.

It localises to the cytoplasm. In terms of biological role, molecular chaperone. Has ATPase activity. The sequence is that of Chaperone protein HtpG from Alkaliphilus metalliredigens (strain QYMF).